The following is an 83-amino-acid chain: Mu-theraphotoxin-Hhn2j 2 (83 aa).

Residues 1-21 (MKASMFLALAGLVLLFVVGYA) form the signal peptide. Residues 22 to 48 (SESEEKEFPIELLSKIFAVDVFKGEDR) constitute a propeptide that is removed on maturation. 3 cysteine pairs are disulfide-bonded: Cys-50–Cys-65, Cys-57–Cys-70, and Cys-64–Cys-77. A Leucine amide modification is found at Leu-81.

Belongs to the neurotoxin 10 (Hwtx-1) family. 15 (Hntx-3) subfamily. In terms of assembly, monomer. Expressed by the venom gland.

It localises to the secreted. Functionally, lethal neurotoxin. Selectively blocks tetrodotoxin-sensitive voltage-gated sodium channels (Nav). Does not affect tetrodotoxin-resistant voltage-gated sodium channels or calcium channels. The polypeptide is Mu-theraphotoxin-Hhn2j 2 (Cyriopagopus hainanus (Chinese bird spider)).